Consider the following 927-residue polypeptide: Probable dipeptidyl-aminopeptidase B (927 aa).

Disordered regions lie at residues 1-44 (MAPA…TTSI) and 58-101 (GHFE…KNDG). The Cytoplasmic segment spans residues 1-108 (MAPAPGMAPY…NDGMNRGMRR (108 aa)). Composition is skewed to basic and acidic residues over residues 19-36 (HRPE…HESE) and 58-70 (GHFE…PMKE). A helical; Signal-anchor for type II membrane protein transmembrane segment spans residues 109–129 (TLIIVAGLLISAWVVGLFFYV). Topologically, residues 130-927 (SHKSYKPASQ…RSIQPILPIL (798 aa)) are vacuolar. 2 N-linked (GlcNAc...) asparagine glycosylation sites follow: N365 and N530. Catalysis depends on S769, which acts as the Charge relay system. N828 carries an N-linked (GlcNAc...) asparagine glycan. Residues D846 and H879 each act as charge relay system in the active site.

This sequence belongs to the peptidase S9B family.

It is found in the vacuole membrane. It carries out the reaction Release of an N-terminal dipeptide, Xaa-Yaa-|-Zaa-, from a polypeptide, preferentially when Yaa is Pro, provided Zaa is neither Pro nor hydroxyproline.. In terms of biological role, type IV dipeptidyl-peptidase which removes N-terminal dipeptides sequentially from polypeptides having unsubstituted N-termini provided that the penultimate residue is proline. The sequence is that of Probable dipeptidyl-aminopeptidase B (DAPB) from Podospora anserina (strain S / ATCC MYA-4624 / DSM 980 / FGSC 10383) (Pleurage anserina).